The following is a 266-amino-acid chain: Oxidoreductase aflX (266 aa).

Belongs to the avfA family.

It functions in the pathway mycotoxin biosynthesis; aflatoxin biosynthesis. Oxidoreductase; part of the gene cluster that mediates the biosynthesis of aflatoxins, a group of polyketide-derived furanocoumarins, and part of the most toxic and carcinogenic compounds among the known mycotoxins. The four major aflatoxins produced by A.parasiticus are aflatoxin B1 (AFB1), aflatoxin B2 (AFB2), aflatoxin G1 (AFG1) and aflatoxin G2 (AFG2). Within the aflatoxin pathway, the oxidoreductase aflX seems to be involved in the conversion of versicolorin A (VERA) to demethylsterigmatocystin (DMST), through probable epoxide ring-opening step following versicolorin A oxidation required for the formation of the xanthone ring. The biosynthesis of aflatoxins begins with the norsolorinic acid synthase aflC that combines a hexanoyl starter unit produced by the fatty acid synthase aflA/aflB and 7 malonyl-CoA extender units to synthesize the precursor NOR. The second step is the conversion of NOR to averantin and requires the norsolorinic acid ketoreductase aflD, which catalyzes the dehydration of norsolorinic acid to form (1'S)-averantin. The norsolorinic acid reductases aflE and aflF may also play a role in the conversion of NOR to AVN. The cytochrome P450 monooxygenase aflG then catalyzes the hydroxylation of AVN to 5'hydroxyaverantin (HAVN). The next step is performed by the 5'-hydroxyaverantin dehydrogenase aflH that transforms HAVN to 5'-oxoaverantin (OAVN) which is further converted to averufin (AVF) by aflK that plays a dual role in the pathway, as a 5'-oxoaverantin cyclase that mediates conversion of 5'-oxoaverantin, as well as a versicolorin B synthase in a later step in the pathway. The averufin oxidase aflI catalyzes the conversion of AVF to versiconal hemiacetal acetate (VHA). VHA is then the substrate for the versiconal hemiacetal acetate esterase aflJ to yield versiconal (VAL). Versicolorin B synthase aflK then converts VAL to versicolorin B (VERB) by closing the bisfuran ring of aflatoxin which is required for DNA-binding, thus giving to aflatoxin its activity as a mutagen. Then, the activity of the versicolorin B desaturase aflL leads to versicolorin A (VERA). A branch point starts from VERB since it can also be converted to dihydrodemethylsterigmatocystin (DMDHST), probably also by aflL, VERA being a precursor for aflatoxins B1 and G1, and DMDHST for aflatoxins B2 and G2. Next, the versicolorin reductase aflM and the cytochrome P450 monooxygenase aflN are involved in conversion of VERA to demethylsterigmatocystin (DMST). AflX and aflY seem also involved in this step, through probable aflX-mediated epoxide ring-opening step following versicolorin A oxidation and aflY-mediated Baeyer-Villiger oxidation required for the formation of the xanthone ring. The methyltransferase aflO then leads to the modification of DMST to sterigmatocystin (ST), and of DMDHST to dihydrosterigmatocystin (DHST). Both ST and DHST are then substrates of the O-methyltransferase aflP to yield O-methylsterigmatocystin (OMST) and dihydro-O-methylsterigmatocystin (DHOMST), respectively. Finally OMST is converted to aflatoxins B1 and G1, and DHOMST to aflatoxins B2 and G2, via the action of several enzymes including O-methylsterigmatocystin oxidoreductase aflQ, the cytochrome P450 monooxygenase aflU, but also the NADH-dependent flavin oxidoreductase nadA which is specifically required for the synthesis of AFG1. The sequence is that of Oxidoreductase aflX from Aspergillus parasiticus (strain ATCC 56775 / NRRL 5862 / SRRC 143 / SU-1).